The primary structure comprises 292 residues: E3 ubiquitin-protein ligase RNF144A (292 aa).

The segment at 16–236 is TRIAD supradomain; that stretch reads PLVSCKLCLG…YDKGPCRNKL (221 aa). Residues C20, C23, C43, C46, C111, C116, C135, C138, C143, C146, H151, C156, C185, and C188 each contribute to the Zn(2+) site. The RING-type 1 zinc finger occupies 20–70; sequence CKLCLGEYPVEQMTTIAQCQCIFCTLCLKQYVELLIKEGLETAISCPDAAC. The IBR-type zinc finger occupies 91–156; that stretch reads QRYKKLQFER…KASWHPGQGC (66 aa). The RING-type 2; atypical zinc finger occupies 185–214; that stretch reads CPKCKVYIERDEGCAQMMCKNCKHAFCWYC. The active site involves C198. Residues C203, C206, C211, C214, H226, and C232 each contribute to the Zn(2+) site. The helical transmembrane segment at 250–270 threads the bilayer; that stretch reads VVGIFAGFGLLLLVASPFLLL.

This sequence belongs to the RBR family. RNF144 subfamily. Self-associates. Interacts with UBE2L3. Post-translationally, auto-ubiquitinated.

Its subcellular location is the cell membrane. It is found in the cytoplasmic vesicle membrane. The protein resides in the endosome membrane. The protein localises to the endoplasmic reticulum membrane. The catalysed reaction is [E2 ubiquitin-conjugating enzyme]-S-ubiquitinyl-L-cysteine + [acceptor protein]-L-lysine = [E2 ubiquitin-conjugating enzyme]-L-cysteine + [acceptor protein]-N(6)-ubiquitinyl-L-lysine.. Its pathway is protein modification; protein ubiquitination. In terms of biological role, E3 ubiquitin-protein ligase which accepts ubiquitin from E2 ubiquitin-conjugating enzymes UBE2L3 and UBE2L6 in the form of a thioester and then directly transfers the ubiquitin to targeted substrates. Mediates the ubiquitination and degradation of the DNA damage kinase PRKDC during DNA damage. Positively regulates DNA virus or exogenous cytosolic DNA-triggered innate immune response by mediating STING1 ubiquitination and increasing its 'Lys-6'-linked ubiquitination and translocation from the endoplasmic reticulum to the Golgi leading to downstream signaling pathways. Plays a positive role in EGF-dependent cell proliferation by prolonging EGF/EGFR signaling during EGF stimulation through EGFR ubiquitination. Increases ERK activity independently of EGFR signaling by promoting polyubiquitination and subsequent degradation of VRK3 in the cytosol. The protein is E3 ubiquitin-protein ligase RNF144A (RNF144A) of Homo sapiens (Human).